A 455-amino-acid chain; its full sequence is GTPase Der (455 aa).

2 EngA-type G domains span residues 4–169 and 178–353; these read PIVA…PPKH and IQMA…EQHR. GTP-binding positions include 10–17, 57–61, 120–123, 184–191, 231–235, and 296–299; these read GRPNVGKS, DTGGL, NKCE, DTAGI, and NKWD. The KH-like domain maps to 354–439; sequence RRVSTSVVNE…PLKLFWRGKQ (86 aa).

This sequence belongs to the TRAFAC class TrmE-Era-EngA-EngB-Septin-like GTPase superfamily. EngA (Der) GTPase family. As to quaternary structure, associates with the 50S ribosomal subunit.

Functionally, GTPase that plays an essential role in the late steps of ribosome biogenesis. The polypeptide is GTPase Der (Prochlorococcus marinus (strain MIT 9313)).